A 217-amino-acid chain; its full sequence is Probable GTP-binding protein EngB (217 aa).

Residues 40 to 217 (DVPEIAFAGR…RAAVLQDAMG (178 aa)) enclose the EngB-type G domain. GTP contacts are provided by residues 48–55 (GRSNVGKS), 75–79 (GRTQE), 95–98 (DMPG), 162–165 (TKAD), and 196–198 (TSS). Mg(2+)-binding residues include S55 and T77.

Belongs to the TRAFAC class TrmE-Era-EngA-EngB-Septin-like GTPase superfamily. EngB GTPase family. It depends on Mg(2+) as a cofactor.

Necessary for normal cell division and for the maintenance of normal septation. This chain is Probable GTP-binding protein EngB, found in Novosphingobium aromaticivorans (strain ATCC 700278 / DSM 12444 / CCUG 56034 / CIP 105152 / NBRC 16084 / F199).